The following is an 835-amino-acid chain: Microcephalin (835 aa).

Positions 1-93 constitute a BRCT 1 domain; the sequence is MAAPILKDVV…AHIDESLFPA (93 aa). Ser-279, Ser-287, Ser-296, and Ser-333 each carry phosphoserine. Disordered stretches follow at residues 313–381 and 419–443; these read PDQK…RRSI and DNLK…AQLS. At Thr-335 the chain carries Phosphothreonine. The segment covering 343–361 has biased composition (basic residues); the sequence is LLIHSRPRSSSVKRKRVSH. Residues 434–443 show a composition bias toward polar residues; it reads QLPSSPAQLS. Ser-548 bears the Phosphoserine mark. Residues 555-584 are disordered; sequence AVGLKSTQNKGTTSKISNSSEGEAQSEHEP. Polar residues predominate over residues 559-577; sequence KSTQNKGTTSKISNSSEGE. BRCT domains follow at residues 640-730 and 751-833; these read SGRG…PFEL and YRGT…NYLL.

In terms of assembly, interacts with CDC27 and maybe other components of the APC/C complex. Interacts with histone variant H2AX under DNA damage conditions. As to expression, expressed in fetal brain, liver and kidney.

The protein resides in the cytoplasm. It localises to the cytoskeleton. The protein localises to the microtubule organizing center. It is found in the centrosome. Functionally, implicated in chromosome condensation and DNA damage induced cellular responses. May play a role in neurogenesis and regulation of the size of the cerebral cortex. This Homo sapiens (Human) protein is Microcephalin.